The primary structure comprises 347 residues: Isopentenyl-diphosphate delta-isomerase (347 aa).

Arg11–Lys12 is a binding site for substrate. FMN contacts are provided by residues Ala72–Thr74, Ser102, and Asn131. Substrate is bound at residue Gln161. Glu162 is a binding site for Mg(2+). Residues Lys192, Thr222, and Ala287–Gly288 contribute to the FMN site.

It belongs to the IPP isomerase type 2 family. As to quaternary structure, homooctamer. Dimer of tetramers. FMN is required as a cofactor. It depends on NADPH as a cofactor. Mg(2+) serves as cofactor.

It localises to the cytoplasm. It catalyses the reaction isopentenyl diphosphate = dimethylallyl diphosphate. Its function is as follows. Involved in the biosynthesis of isoprenoids. Catalyzes the 1,3-allylic rearrangement of the homoallylic substrate isopentenyl (IPP) to its allylic isomer, dimethylallyl diphosphate (DMAPP). This Lactococcus lactis subsp. lactis (strain IL1403) (Streptococcus lactis) protein is Isopentenyl-diphosphate delta-isomerase.